Here is a 291-residue protein sequence, read N- to C-terminus: MVREQYTTITEGTHIERPENQAVYKIGIYGWRKRCLYLFVLLLLIVLLVNFALTIWILRVMWFSPVGMGHLHVTADGLHLEGESEFLFPLYVKEIRSRVDSSLLLQSTQNVTMNARNTEGEVTGRLKVGPQMVEVQSQQFQIHSKDGKPLFTVDEEKVMVGTDKLRVTGPEGALFEHSVETPLVRPDPPQDLRLESPTRSLSMDAPKGIHIQAPAGKIEALTQMDIVLQSSDGTVVLDAETVCLPELALGSQGPAGSSQGLYEVCVCPDGKLYLSVAGMGTTCHEHSHLCL.

The helical; Signal-anchor for type II membrane protein transmembrane segment at 38–58 threads the bilayer; that stretch reads LFVLLLLIVLLVNFALTIWIL. Over 59 to 291 the chain is Extracellular; sequence RVMWFSPVGM…TCHEHSHLCL (233 aa). N110 is a glycosylation site (N-linked (GlcNAc...) asparagine). Cystine bridges form between C265/C290 and C267/C283.

It belongs to the sarcoglycan beta/delta/gamma/zeta family. In terms of assembly, interacts with the syntrophin SNTA1. Cross-link to form 2 major subcomplexes: one consisting of SGCB, SGCD and SGCG and the other consisting of SGCB and SGCD. The association between SGCB and SGCG is particularly strong while SGCA is loosely associated with the other sarcoglycans. Interacts with FLNC. Post-translationally, disulfide bonds are present.

The protein localises to the cell membrane. It localises to the sarcolemma. Its subcellular location is the cytoplasm. It is found in the cytoskeleton. Its function is as follows. Component of the sarcoglycan complex, a subcomplex of the dystrophin-glycoprotein complex which forms a link between the F-actin cytoskeleton and the extracellular matrix. This Bos taurus (Bovine) protein is Gamma-sarcoglycan (SGCG).